Consider the following 627-residue polypeptide: Coiled-coil domain-containing protein 22 (627 aa).

The sufficient for interaction with COMMD1 stretch occupies residues 1-321 (MEEADRILIH…VADIPAASQR (321 aa)). The interval 1–447 (MEEADRILIH…LQDCRELESS (447 aa)) is sufficicient and required for interaction with CCDC93. Residues 321–384 (RPEQDTRAAQ…SVAEQEQALR (64 aa)) are a coiled coil. Position 410 is a phosphoserine (serine 410). Residues 448–535 (RRLVEIQELH…NSLSGKLDRT (88 aa)) are a coiled coil.

It belongs to the CCDC22 family. In terms of assembly, component of the commander complex consisting of the CCC subcomplex and the retriever subcomplex. Component of the CCC (COMMD/CCDC22/CCDC93) subcomplex consisting of COMMD1, COMMD2, COMMD3, COMMD4, COMMD5, COMMD6, COMMD7, COMMD8, COMMD9, COMMD10, CCDC22 and CCDC93. Forms a coiled-coil heterodimer with CCDC22; this heterodimer interacts with the guanine nucleotide exchange factor DENND10; the interaction is direct. Interacts with CUL1, CUL2, CUL3, SKP1, BTRC. Interacts with SNX17 and SNX31. Interacts with CPNE1 and CPNE4.

The protein localises to the endosome. It is found in the cytoplasm. It localises to the cytoskeleton. The protein resides in the microtubule organizing center. Its subcellular location is the centrosome. Its function is as follows. Component of the commander complex that is essential for endosomal recycling of transmembrane cargos; the Commander complex is composed of composed of the CCC subcomplex and the retriever subcomplex. Component of the CCC complex, which is involved in the regulation of endosomal recycling of surface proteins, including integrins, signaling receptor and channels. Involved in regulation of NF-kappa-B signaling. Promotes ubiquitination of I-kappa-B-kinase subunit IKBKB and its subsequent proteasomal degradation leading to NF-kappa-B activation; the function may involve association with COMMD8 and a CUL1-dependent E3 ubiquitin ligase complex. May down-regulate NF-kappa-B activity via association with COMMD1 and involving a CUL2-dependent E3 ubiquitin ligase complex. Regulates the cellular localization of COMM domain-containing proteins, such as COMMD1 and COMMD10. Component of the CCC complex, which is involved in the regulation of endosomal recycling of surface proteins, including integrins, signaling receptor and channels. The CCC complex associates with SNX17, retriever and WASH complexes to prevent lysosomal degradation and promote cell surface recycling of numerous cargos such as integrins ITGA5:ITGB1. Plays a role in copper ion homeostasis. Involved in copper-dependent ATP7A trafficking between the trans-Golgi network and vesicles in the cell periphery; the function is proposed to depend on its association within the CCC complex and cooperation with the WASH complex on early endosomes. This is Coiled-coil domain-containing protein 22 from Rattus norvegicus (Rat).